The sequence spans 1072 residues: DNA-directed RNA polymerase subunit beta (1072 aa).

Belongs to the RNA polymerase beta chain family. In terms of assembly, in plastids the minimal PEP RNA polymerase catalytic core is composed of four subunits: alpha, beta, beta', and beta''. When a (nuclear-encoded) sigma factor is associated with the core the holoenzyme is formed, which can initiate transcription.

Its subcellular location is the plastid. The protein localises to the chloroplast. It catalyses the reaction RNA(n) + a ribonucleoside 5'-triphosphate = RNA(n+1) + diphosphate. In terms of biological role, DNA-dependent RNA polymerase catalyzes the transcription of DNA into RNA using the four ribonucleoside triphosphates as substrates. In Draba nemorosa (Woodland whitlowgrass), this protein is DNA-directed RNA polymerase subunit beta.